Here is a 904-residue protein sequence, read N- to C-terminus: Protein translocase subunit SecA (904 aa).

ATP-binding positions include Gln-89, 107–111 (GEGKT), and Asp-502. Residues Cys-886, Cys-888, Cys-897, and His-898 each contribute to the Zn(2+) site.

Belongs to the SecA family. Monomer and homodimer. Part of the essential Sec protein translocation apparatus which comprises SecA, SecYEG and auxiliary proteins SecDF-YajC and YidC. It depends on Zn(2+) as a cofactor.

Its subcellular location is the cell inner membrane. The protein localises to the cytoplasm. It carries out the reaction ATP + H2O + cellular proteinSide 1 = ADP + phosphate + cellular proteinSide 2.. Part of the Sec protein translocase complex. Interacts with the SecYEG preprotein conducting channel. Has a central role in coupling the hydrolysis of ATP to the transfer of proteins into and across the cell membrane, serving both as a receptor for the preprotein-SecB complex and as an ATP-driven molecular motor driving the stepwise translocation of polypeptide chains across the membrane. This chain is Protein translocase subunit SecA, found in Rhizobium etli (strain CIAT 652).